The chain runs to 469 residues: Crinkler effector protein 1 (469 aa).

Residues Met-1–Ala-17 form the signal peptide. An LQLFLAK-like domain region spans residues Phe-18 to Pro-57. Residues Ile-58–Ile-96 are DWL domain. The N-linked (GlcNAc...) asparagine glycan is linked to Asn-68. Positions His-97–Pro-103 match the HVLVXXP motif motif. Asn-126, Asn-181, and Asn-248 each carry an N-linked (GlcNAc...) asparagine glycan.

This sequence belongs to the Crinkler effector family. Homodimer.

Its subcellular location is the secreted. It is found in the host nucleus. In terms of biological role, effector that participates in the arbuscule development step of the symbiosis. Arbuscular mycorrhizal (AM) symbiosis is one of the most prominent and beneficial plant-microbe interactions that facilitates mineral nutrition and confers tolerance to biotic and abiotic stresses. Is not involved in cell death processes. The polypeptide is Crinkler effector protein 1 (Rhizophagus irregularis (strain DAOM 181602 / DAOM 197198 / MUCL 43194) (Arbuscular mycorrhizal fungus)).